Consider the following 261-residue polypeptide: Cytochrome c oxidase subunit 3 (261 aa).

Residues 1 to 15 (MTHQTHAYHMVNPSP) are Mitochondrial matrix-facing. The helical transmembrane segment at 16–34 (WPLTGALSALLMTSGLIMW) threads the bilayer. At 35–40 (FHFNST) the chain is on the mitochondrial intermembrane side. The helical transmembrane segment at 41–66 (TLLMLGLTTNMLTMYQWWRDVIREST) threads the bilayer. The Mitochondrial matrix portion of the chain corresponds to 67 to 72 (FQGHHT). Residues 73–105 (PNVQKGLRYGMILFIISEVLFFTGFFWAFYHSS) traverse the membrane as a helical segment. Topologically, residues 106 to 128 (LAPTPELGGCWPPTGIHPLNPLE) are mitochondrial intermembrane. Residues 129–152 (VPLLNTSVLLASGVSITWAHHSLM) form a helical membrane-spanning segment. The Mitochondrial matrix portion of the chain corresponds to 153–155 (EGN). Residues 156–183 (RNHMLQALFITIALGVYFTLLQASEYYE) traverse the membrane as a helical segment. At 184–190 (APFTISD) the chain is on the mitochondrial intermembrane side. A helical transmembrane segment spans residues 191 to 223 (GVYGSTFFVATGFHGLHVIIGSTFLIVCFFRQL). Residues 224–232 (KFHFTSSHH) lie on the Mitochondrial matrix side of the membrane. A helical transmembrane segment spans residues 233-256 (FGFEAAAWYWHFVDVVWLFLYVSI). At 257–261 (YWWGS) the chain is on the mitochondrial intermembrane side.

It belongs to the cytochrome c oxidase subunit 3 family. In terms of assembly, component of the cytochrome c oxidase (complex IV, CIV), a multisubunit enzyme composed of 14 subunits. The complex is composed of a catalytic core of 3 subunits MT-CO1, MT-CO2 and MT-CO3, encoded in the mitochondrial DNA, and 11 supernumerary subunits COX4I, COX5A, COX5B, COX6A, COX6B, COX6C, COX7A, COX7B, COX7C, COX8 and NDUFA4, which are encoded in the nuclear genome. The complex exists as a monomer or a dimer and forms supercomplexes (SCs) in the inner mitochondrial membrane with NADH-ubiquinone oxidoreductase (complex I, CI) and ubiquinol-cytochrome c oxidoreductase (cytochrome b-c1 complex, complex III, CIII), resulting in different assemblies (supercomplex SCI(1)III(2)IV(1) and megacomplex MCI(2)III(2)IV(2)).

It is found in the mitochondrion inner membrane. The enzyme catalyses 4 Fe(II)-[cytochrome c] + O2 + 8 H(+)(in) = 4 Fe(III)-[cytochrome c] + 2 H2O + 4 H(+)(out). Its function is as follows. Component of the cytochrome c oxidase, the last enzyme in the mitochondrial electron transport chain which drives oxidative phosphorylation. The respiratory chain contains 3 multisubunit complexes succinate dehydrogenase (complex II, CII), ubiquinol-cytochrome c oxidoreductase (cytochrome b-c1 complex, complex III, CIII) and cytochrome c oxidase (complex IV, CIV), that cooperate to transfer electrons derived from NADH and succinate to molecular oxygen, creating an electrochemical gradient over the inner membrane that drives transmembrane transport and the ATP synthase. Cytochrome c oxidase is the component of the respiratory chain that catalyzes the reduction of oxygen to water. Electrons originating from reduced cytochrome c in the intermembrane space (IMS) are transferred via the dinuclear copper A center (CU(A)) of subunit 2 and heme A of subunit 1 to the active site in subunit 1, a binuclear center (BNC) formed by heme A3 and copper B (CU(B)). The BNC reduces molecular oxygen to 2 water molecules using 4 electrons from cytochrome c in the IMS and 4 protons from the mitochondrial matrix. The protein is Cytochrome c oxidase subunit 3 (MT-CO3) of Gazella bennettii (Chinkara).